Here is a 121-residue protein sequence, read N- to C-terminus: Large ribosomal subunit protein uL14c (121 aa).

This sequence belongs to the universal ribosomal protein uL14 family. In terms of assembly, part of the 50S ribosomal subunit.

It is found in the plastid. Its subcellular location is the chloroplast. Functionally, binds to 23S rRNA. This is Large ribosomal subunit protein uL14c from Tetradesmus obliquus (Green alga).